Here is a 96-residue protein sequence, read N- to C-terminus: Aspartyl/glutamyl-tRNA(Asn/Gln) amidotransferase subunit C (96 aa).

It belongs to the GatC family. Heterotrimer of A, B and C subunits.

It carries out the reaction L-glutamyl-tRNA(Gln) + L-glutamine + ATP + H2O = L-glutaminyl-tRNA(Gln) + L-glutamate + ADP + phosphate + H(+). The catalysed reaction is L-aspartyl-tRNA(Asn) + L-glutamine + ATP + H2O = L-asparaginyl-tRNA(Asn) + L-glutamate + ADP + phosphate + 2 H(+). Allows the formation of correctly charged Asn-tRNA(Asn) or Gln-tRNA(Gln) through the transamidation of misacylated Asp-tRNA(Asn) or Glu-tRNA(Gln) in organisms which lack either or both of asparaginyl-tRNA or glutaminyl-tRNA synthetases. The reaction takes place in the presence of glutamine and ATP through an activated phospho-Asp-tRNA(Asn) or phospho-Glu-tRNA(Gln). This chain is Aspartyl/glutamyl-tRNA(Asn/Gln) amidotransferase subunit C, found in Chloroflexus aggregans (strain MD-66 / DSM 9485).